A 275-amino-acid polypeptide reads, in one-letter code: Lectin (275 aa).

An N-terminal signal peptide occupies residues 1 to 30; it reads MASLQTQMISFYLIFLSILLTTIFFFKVNS. D-glucose-binding residues include aspartate 111 and glycine 129. Residues glutamate 149 and aspartate 151 each coordinate Mn(2+). Ca(2+)-binding residues include aspartate 151, phenylalanine 153, asparagine 155, and aspartate 159. Mn(2+)-binding residues include aspartate 159 and histidine 166. The propeptide occupies 211–217; that stretch reads NSLEEEN. The D-glucose site is built by glycine 246 and alanine 247. The propeptide occupies 270-275; it reads KQAADA.

It belongs to the leguminous lectin family. As to quaternary structure, heterotetramer of two alpha and two beta chains. In terms of processing, the mature form consists of two chains, alpha and beta, produced by cleavage of the immature protein. These remain cleaved, yet fold together to form one subunit.

Its function is as follows. D-mannose specific lectin. This Lens culinaris subsp. culinaris (Cultivated lentil) protein is Lectin.